Reading from the N-terminus, the 129-residue chain is Follitropin subunit beta (129 aa).

Positions Met-1–Gly-20 are cleaved as a signal peptide. 6 disulfide bridges follow: Cys-21–Cys-69, Cys-35–Cys-84, Cys-38–Cys-122, Cys-46–Cys-100, Cys-50–Cys-102, and Cys-105–Cys-112. 2 N-linked (GlcNAc...) asparagine glycosylation sites follow: Asn-25 and Asn-42.

It belongs to the glycoprotein hormones subunit beta family. As to quaternary structure, heterodimer. The active follitropin is a heterodimer composed of an alpha chain/CGA shared with other hormones and a unique beta chain/FSHB shown here.

It localises to the secreted. Functionally, together with the alpha chain CGA constitutes follitropin, the follicle-stimulating hormone, and provides its biological specificity to the hormone heterodimer. Binds FSHR, a G protein-coupled receptor, on target cells to activate downstream signaling pathways. Follitropin is involved in follicle development and spermatogenesis in reproductive organs. The sequence is that of Follitropin subunit beta (FSHB) from Trichosurus vulpecula (Brush-tailed possum).